A 101-amino-acid chain; its full sequence is MEGNDLDKYRFPKTLSEQNRIIGLPLDEAIPAAVVLLWGFFTKKYLFSLIIAAVIWQLIRAAKCGKSSRWLYNWCYWYLPTELFRVVYRVIPDSSFRKWIK.

The protein resides in the cell outer membrane. In terms of biological role, membrane protein involved in F pilin formation. In Salmonella typhi, this protein is Protein TraL (traL).